Reading from the N-terminus, the 79-residue chain is Major outer membrane lipoprotein Lpp 2 (79 aa).

An N-terminal signal peptide occupies residues 1–21 (MNRTNKLILGAVVLGSALLAG). The N-palmitoyl cysteine moiety is linked to residue C22. C22 carries S-diacylglycerol cysteine lipidation. 2 repeats span residues 25-35 (NAKIDQLSSDV) and 39-49 (SAKVDQLSNDV). Residues 28 to 76 (IDQLSSDVQTLSAKVDQLSNDVNAMRSDIQAAKDDAARANQRLDNKVSR) adopt a coiled-coil conformation. The tract at residues 60–79 (KDDAARANQRLDNKVSRVRK) is disordered. K79 bears the N6-murein peptidoglycan lysine mark.

It belongs to the Lpp family. In terms of assembly, homotrimer.

The protein localises to the cell outer membrane. Its subcellular location is the secreted. It localises to the cell wall. Its function is as follows. A highly abundant outer membrane lipoprotein that controls the distance between the inner and outer membranes. The only protein known to be covalently linked to the peptidoglycan network (PGN). Also non-covalently binds the PGN. The link between the cell outer membrane and PGN contributes to maintenance of the structural and functional integrity of the cell envelope, and maintains the correct distance between the PGN and the outer membrane. The sequence is that of Major outer membrane lipoprotein Lpp 2 from Salmonella paratyphi A (strain ATCC 9150 / SARB42).